A 63-amino-acid polypeptide reads, in one-letter code: Large ribosomal subunit protein uL29 (63 aa).

Belongs to the universal ribosomal protein uL29 family.

The chain is Large ribosomal subunit protein uL29 from Pectobacterium atrosepticum (strain SCRI 1043 / ATCC BAA-672) (Erwinia carotovora subsp. atroseptica).